The sequence spans 720 residues: Glutaryl-7-aminocephalosporanic-acid acylase (720 aa).

The signal sequence occupies residues 1-29 (MLRVLHRAASALVMATVIGLAPAVAFALA). A propeptide spans 190–198 (DPPDLADQG) (spacer peptide). The active-site Nucleophile is the Ser199. Catalysis depends on residues His221 and Glu653.

This sequence belongs to the peptidase S45 family. Heterotetramer of two alpha and two beta subunits processed from the same precursor.

The protein resides in the periplasm. It catalyses the reaction (7R)-7-(4-carboxybutanamido)cephalosporanate + H2O = (7R)-7-aminocephalosporanate + glutarate. Functionally, catalyzes the deacylation of 7 beta-(4-carboxybutanamido)cephalosporanic acid (glutaryl-7-aminocephalosporanic acid or GL-7-ACA) to 7-aminocephalosporanic acid (7-ACA). The protein is Glutaryl-7-aminocephalosporanic-acid acylase of Pseudomonas sp. (strain SY-77).